Consider the following 148-residue polypeptide: MFQGETAITVDDKGRMAVPTAYRDLVARASNNRLVLTYNPFEAGCLWLYAESEWERVRDDVMSKPNTQRVVRLLQQKLVGSAAHLELDGNGRISIPASHRGAVGIEKKAVLLGMGDKFELWSEQAHRALIQQTLSDEDLGDGLLDLKL.

2 consecutive SpoVT-AbrB domains span residues 5–53 (ETAI…AESE) and 82–125 (AAHL…SEQA).

The protein belongs to the MraZ family. Forms oligomers.

It localises to the cytoplasm. The protein localises to the nucleoid. The protein is Transcriptional regulator MraZ of Stenotrophomonas maltophilia (strain R551-3).